A 401-amino-acid polypeptide reads, in one-letter code: CCA-adding enzyme (401 aa).

Residues Gly32 and Arg35 each contribute to the ATP site. Residues Gly32 and Arg35 each coordinate CTP. Residues Asp45 and Asp47 each contribute to the Mg(2+) site. The ATP site is built by Arg116, Asp159, Arg162, Arg165, and Arg168. Residues Arg116, Asp159, Arg162, Arg165, and Arg168 each coordinate CTP.

This sequence belongs to the tRNA nucleotidyltransferase/poly(A) polymerase family. Bacterial CCA-adding enzyme type 3 subfamily. In terms of assembly, homodimer. Mg(2+) is required as a cofactor.

The enzyme catalyses a tRNA precursor + 2 CTP + ATP = a tRNA with a 3' CCA end + 3 diphosphate. It carries out the reaction a tRNA with a 3' CCA end + 2 CTP + ATP = a tRNA with a 3' CCACCA end + 3 diphosphate. In terms of biological role, catalyzes the addition and repair of the essential 3'-terminal CCA sequence in tRNAs without using a nucleic acid template. Adds these three nucleotides in the order of C, C, and A to the tRNA nucleotide-73, using CTP and ATP as substrates and producing inorganic pyrophosphate. tRNA 3'-terminal CCA addition is required both for tRNA processing and repair. Also involved in tRNA surveillance by mediating tandem CCA addition to generate a CCACCA at the 3' terminus of unstable tRNAs. While stable tRNAs receive only 3'-terminal CCA, unstable tRNAs are marked with CCACCA and rapidly degraded. This chain is CCA-adding enzyme, found in Leuconostoc mesenteroides subsp. mesenteroides (strain ATCC 8293 / DSM 20343 / BCRC 11652 / CCM 1803 / JCM 6124 / NCDO 523 / NBRC 100496 / NCIMB 8023 / NCTC 12954 / NRRL B-1118 / 37Y).